A 360-amino-acid chain; its full sequence is DNA integrity scanning protein DisA (360 aa).

One can recognise a DAC domain in the interval 9–147 (DNDLMDILNI…NNIKYVLRDS (139 aa)). ATP-binding positions include Gly-76, Leu-94, and 107 to 111 (TRHRT).

It belongs to the DisA family. As to quaternary structure, homooctamer. Mg(2+) serves as cofactor.

It carries out the reaction 2 ATP = 3',3'-c-di-AMP + 2 diphosphate. Its function is as follows. Participates in a DNA-damage check-point that is active prior to asymmetric division when DNA is damaged. DisA forms globular foci that rapidly scan along the chromosomes during sporulation, searching for lesions. When a lesion is present, DisA pauses at the lesion site. This triggers a cellular response that culminates in a temporary block in sporulation initiation. Functionally, also has diadenylate cyclase activity, catalyzing the condensation of 2 ATP molecules into cyclic di-AMP (c-di-AMP). c-di-AMP acts as a signaling molecule that couples DNA integrity with progression of sporulation. The rise in c-di-AMP level generated by DisA while scanning the chromosome, operates as a positive signal that advances sporulation; upon encountering a lesion, the DisA focus arrests at the damaged site and halts c-di-AMP synthesis. The polypeptide is DNA integrity scanning protein DisA (Clostridium tetani (strain Massachusetts / E88)).